A 353-amino-acid chain; its full sequence is Photosystem II protein D1 (353 aa).

Position 2 is an N-acetylthreonine (Thr-2). Residue Thr-2 is modified to Phosphothreonine. 3 helical membrane-spanning segments follow: residues 29-46 (YIGWFGVLMIPTLLTATS), 118-133 (HFLLGVACYMGREWEL), and 142-156 (WIAVAYSAPVAAATA). His-118 provides a ligand contact to chlorophyll a. Residue Tyr-126 coordinates pheophytin a. Asp-170 and Glu-189 together coordinate [CaMn4O5] cluster. A helical transmembrane segment spans residues 197 to 218 (FHMLGVAGVFGGSLFSAMHGSL). Residue His-198 coordinates chlorophyll a. A quinone contacts are provided by residues His-215 and 264–265 (SF). Residue His-215 coordinates Fe cation. Fe cation is bound at residue His-272. The helical transmembrane segment at 274 to 288 (FLAAWPVIGIWFTAL) threads the bilayer. 4 residues coordinate [CaMn4O5] cluster: His-332, Glu-333, Asp-342, and Ala-344. Positions 345–353 (AIEAPSTNG) are excised as a propeptide.

Belongs to the reaction center PufL/M/PsbA/D family. PSII is composed of 1 copy each of membrane proteins PsbA, PsbB, PsbC, PsbD, PsbE, PsbF, PsbH, PsbI, PsbJ, PsbK, PsbL, PsbM, PsbT, PsbX, PsbY, PsbZ, Psb30/Ycf12, at least 3 peripheral proteins of the oxygen-evolving complex and a large number of cofactors. It forms dimeric complexes. It depends on The D1/D2 heterodimer binds P680, chlorophylls that are the primary electron donor of PSII, and subsequent electron acceptors. It shares a non-heme iron and each subunit binds pheophytin, quinone, additional chlorophylls, carotenoids and lipids. D1 provides most of the ligands for the Mn4-Ca-O5 cluster of the oxygen-evolving complex (OEC). There is also a Cl(-1) ion associated with D1 and D2, which is required for oxygen evolution. The PSII complex binds additional chlorophylls, carotenoids and specific lipids. as a cofactor. Tyr-161 forms a radical intermediate that is referred to as redox-active TyrZ, YZ or Y-Z. Post-translationally, C-terminally processed by CTPA; processing is essential to allow assembly of the oxygen-evolving complex and thus photosynthetic growth.

It is found in the plastid. The protein resides in the chloroplast thylakoid membrane. It catalyses the reaction 2 a plastoquinone + 4 hnu + 2 H2O = 2 a plastoquinol + O2. Functionally, photosystem II (PSII) is a light-driven water:plastoquinone oxidoreductase that uses light energy to abstract electrons from H(2)O, generating O(2) and a proton gradient subsequently used for ATP formation. It consists of a core antenna complex that captures photons, and an electron transfer chain that converts photonic excitation into a charge separation. The D1/D2 (PsbA/PsbD) reaction center heterodimer binds P680, the primary electron donor of PSII as well as several subsequent electron acceptors. The protein is Photosystem II protein D1 of Amaranthus hybridus (Slim amaranth).